The chain runs to 249 residues: Pyridoxine 5'-phosphate synthase (249 aa).

Residue N12 participates in 3-amino-2-oxopropyl phosphate binding. A 1-deoxy-D-xylulose 5-phosphate-binding site is contributed by 14–15 (DH). R23 lines the 3-amino-2-oxopropyl phosphate pocket. The active-site Proton acceptor is H48. 2 residues coordinate 1-deoxy-D-xylulose 5-phosphate: R50 and H55. The Proton acceptor role is filled by E75. T105 contributes to the 1-deoxy-D-xylulose 5-phosphate binding site. The Proton donor role is filled by H199. 3-amino-2-oxopropyl phosphate is bound by residues G200 and 221–222 (GH).

The protein belongs to the PNP synthase family. Homooctamer; tetramer of dimers.

Its subcellular location is the cytoplasm. It catalyses the reaction 3-amino-2-oxopropyl phosphate + 1-deoxy-D-xylulose 5-phosphate = pyridoxine 5'-phosphate + phosphate + 2 H2O + H(+). The protein operates within cofactor biosynthesis; pyridoxine 5'-phosphate biosynthesis; pyridoxine 5'-phosphate from D-erythrose 4-phosphate: step 5/5. Its function is as follows. Catalyzes the complicated ring closure reaction between the two acyclic compounds 1-deoxy-D-xylulose-5-phosphate (DXP) and 3-amino-2-oxopropyl phosphate (1-amino-acetone-3-phosphate or AAP) to form pyridoxine 5'-phosphate (PNP) and inorganic phosphate. The protein is Pyridoxine 5'-phosphate synthase of Roseobacter denitrificans (strain ATCC 33942 / OCh 114) (Erythrobacter sp. (strain OCh 114)).